The primary structure comprises 272 residues: Undecaprenyl-diphosphatase (272 aa).

8 helical membrane-spanning segments follow: residues 4–24, 45–65, 89–109, 115–135, 152–174, 189–209, 225–245, and 251–271; these read IHSLLVAAILGVVEGLTEFLP, AETFEVVIQLGSILAVVVMFW, LTLGHIVLGMIPAVVLGLVFH, LFNPVNVMYALVVGGLLLIAA, TYRQAFMIGCFQCLALWPGFSRS, YAASEFSFLLAVPMMMGATAL, MFAVGFVTAFIVALIAIKTFL, and ISFIPFAIYRFIVAAAVYVVF.

It belongs to the UppP family.

It is found in the cell inner membrane. It catalyses the reaction di-trans,octa-cis-undecaprenyl diphosphate + H2O = di-trans,octa-cis-undecaprenyl phosphate + phosphate + H(+). Its function is as follows. Catalyzes the dephosphorylation of undecaprenyl diphosphate (UPP). Confers resistance to bacitracin. In Citrobacter koseri (strain ATCC BAA-895 / CDC 4225-83 / SGSC4696), this protein is Undecaprenyl-diphosphatase.